Here is a 162-residue protein sequence, read N- to C-terminus: NADH-quinone oxidoreductase subunit I 2 (162 aa).

2 4Fe-4S ferredoxin-type domains span residues 52–82 (LRRY…IEAG) and 93–122 (ERYD…EGPN). [4Fe-4S] cluster-binding residues include C62, C65, C68, C72, C102, C105, C108, and C112.

It belongs to the complex I 23 kDa subunit family. NDH-1 is composed of 14 different subunits. Subunits NuoA, H, J, K, L, M, N constitute the membrane sector of the complex. The cofactor is [4Fe-4S] cluster.

It is found in the cell inner membrane. It catalyses the reaction a quinone + NADH + 5 H(+)(in) = a quinol + NAD(+) + 4 H(+)(out). NDH-1 shuttles electrons from NADH, via FMN and iron-sulfur (Fe-S) centers, to quinones in the respiratory chain. The immediate electron acceptor for the enzyme in this species is believed to be ubiquinone. Couples the redox reaction to proton translocation (for every two electrons transferred, four hydrogen ions are translocated across the cytoplasmic membrane), and thus conserves the redox energy in a proton gradient. The sequence is that of NADH-quinone oxidoreductase subunit I 2 from Rhodopseudomonas palustris (strain BisA53).